A 223-amino-acid chain; its full sequence is Probable cytokinin riboside 5'-monophosphate phosphoribohydrolase LOGL1 (223 aa).

Residues Glu-89, 107-108, 124-130, and Thr-136 contribute to the substrate site; these read RK and GYGTMEE. Residues 201-223 form a disordered region; the sequence is QEVAPRTSWEMSELGYGKTPEES.

It belongs to the LOG family. As to expression, expressed in shoot apex, immature inflorescences and flowers.

It catalyses the reaction N(6)-(dimethylallyl)adenosine 5'-phosphate + H2O = N(6)-dimethylallyladenine + D-ribose 5-phosphate. The enzyme catalyses 9-ribosyl-trans-zeatin 5'-phosphate + H2O = trans-zeatin + D-ribose 5-phosphate. In terms of biological role, cytokinin-activating enzyme working in the direct activation pathway. Phosphoribohydrolase that converts inactive cytokinin nucleotides to the biologically active free-base forms. In Oryza sativa subsp. japonica (Rice), this protein is Probable cytokinin riboside 5'-monophosphate phosphoribohydrolase LOGL1 (LOGL1).